The chain runs to 687 residues: Glycine--tRNA ligase beta subunit (687 aa).

Belongs to the class-II aminoacyl-tRNA synthetase family. Tetramer of two alpha and two beta subunits.

Its subcellular location is the cytoplasm. The catalysed reaction is tRNA(Gly) + glycine + ATP = glycyl-tRNA(Gly) + AMP + diphosphate. The chain is Glycine--tRNA ligase beta subunit from Neisseria meningitidis serogroup C (strain 053442).